The chain runs to 86 residues: Large ribosomal subunit protein bL31 (86 aa).

The interval 66–86 is disordered; that stretch reads GMGSANSATSKEQKADKDSQK. The span at 76-86 shows a compositional bias: basic and acidic residues; the sequence is KEQKADKDSQK.

This sequence belongs to the bacterial ribosomal protein bL31 family. Type A subfamily. In terms of assembly, part of the 50S ribosomal subunit.

Its function is as follows. Binds the 23S rRNA. This Prochlorococcus marinus (strain MIT 9215) protein is Large ribosomal subunit protein bL31.